The following is a 307-amino-acid chain: NADH-ubiquinone oxidoreductase chain 2 (307 aa).

Transmembrane regions (helical) follow at residues Met-1–Thr-21, Trp-25–Leu-45, Tyr-58–Val-78, Phe-88–Ile-108, Ile-119–Cys-139, Met-144–Met-164, Leu-193–Leu-213, Met-217–Gly-237, Leu-250–Leu-270, and His-287–Thr-307.

The protein belongs to the complex I subunit 2 family.

The protein localises to the mitochondrion inner membrane. The enzyme catalyses a ubiquinone + NADH + 5 H(+)(in) = a ubiquinol + NAD(+) + 4 H(+)(out). Its function is as follows. Core subunit of the mitochondrial membrane respiratory chain NADH dehydrogenase (Complex I) that is believed to belong to the minimal assembly required for catalysis. Complex I functions in the transfer of electrons from NADH to the respiratory chain. The immediate electron acceptor for the enzyme is believed to be ubiquinone. This is NADH-ubiquinone oxidoreductase chain 2 (ND2) from Albinaria caerulea (Land snail).